We begin with the raw amino-acid sequence, 600 residues long: MTDLSRIRNFSIIAHIDHGKSTLADRLIEFCGAIEAREMKAQLLDNMDIERERGITIKAQTVRLNYKAKDGEIYQLNLMDTPGHVDFAYEVSRSLAACEGSILVVDASQGVEAQTLANVYQAIDANHEIVPVLNKIDLPAADVPRVKQQIEDVIGLDASDAVEVSAKSGINIDGVLEAIVTRLPPPKGDAAAPLQALIVDSWYDAYLGVVVLVRVVNGELRTGQKVRFMATGATRELDRVGIFGPKKMLVDRLGPGEMGFVTAAIKDIRDTKVGDTITEEKRLAPTPLPGFKPSIPVVFCGLFPTDAADFEDLRESLGKLALNDASFQFEMESSAALGFGFRCGFLGLLHLEIIQERLEREFNLDLITTAPSVVYRMHMNDGTMKEMHNPADMPDPVKIDRIEEPWIKANIMLPDEYLGGVLQLCTERRGIQKDLTYVGGRAMLVYELPLNEVVFDFYDRLKSISRGYASFDYVLEGYREGDLVKMSILVNNEPVDALAMIVHRTQAEYRGRQLCERLKDLIPRHLFKIPIQAAIGGRVIARETIAALRKDVLAKCYGGDISRKRKLLDKQKEGKKRMRQFGEVEIPQSAFIAALRMGQE.

The region spanning 5 to 187 (SRIRNFSIIA…AIVTRLPPPK (183 aa)) is the tr-type G domain. Residues 17–22 (DHGKST) and 134–137 (NKID) contribute to the GTP site.

This sequence belongs to the TRAFAC class translation factor GTPase superfamily. Classic translation factor GTPase family. LepA subfamily.

The protein resides in the cell inner membrane. The catalysed reaction is GTP + H2O = GDP + phosphate + H(+). Required for accurate and efficient protein synthesis under certain stress conditions. May act as a fidelity factor of the translation reaction, by catalyzing a one-codon backward translocation of tRNAs on improperly translocated ribosomes. Back-translocation proceeds from a post-translocation (POST) complex to a pre-translocation (PRE) complex, thus giving elongation factor G a second chance to translocate the tRNAs correctly. Binds to ribosomes in a GTP-dependent manner. In Rhodospirillum centenum (strain ATCC 51521 / SW), this protein is Elongation factor 4.